The chain runs to 135 residues: Large ribosomal subunit protein uL16 (135 aa).

It belongs to the universal ribosomal protein uL16 family. As to quaternary structure, part of the 50S ribosomal subunit.

In terms of biological role, binds 23S rRNA and is also seen to make contacts with the A and possibly P site tRNAs. In Desulfatibacillum aliphaticivorans, this protein is Large ribosomal subunit protein uL16.